The primary structure comprises 149 residues: D-aminoacyl-tRNA deacylase (149 aa).

Positions 137–138 match the Gly-cisPro motif, important for rejection of L-amino acids motif; sequence GP.

Belongs to the DTD family. Homodimer.

It localises to the cytoplasm. It carries out the reaction glycyl-tRNA(Ala) + H2O = tRNA(Ala) + glycine + H(+). The catalysed reaction is a D-aminoacyl-tRNA + H2O = a tRNA + a D-alpha-amino acid + H(+). Functionally, an aminoacyl-tRNA editing enzyme that deacylates mischarged D-aminoacyl-tRNAs. Also deacylates mischarged glycyl-tRNA(Ala), protecting cells against glycine mischarging by AlaRS. Acts via tRNA-based rather than protein-based catalysis; rejects L-amino acids rather than detecting D-amino acids in the active site. By recycling D-aminoacyl-tRNA to D-amino acids and free tRNA molecules, this enzyme counteracts the toxicity associated with the formation of D-aminoacyl-tRNA entities in vivo and helps enforce protein L-homochirality. In Anaeromyxobacter dehalogenans (strain 2CP-C), this protein is D-aminoacyl-tRNA deacylase.